The sequence spans 1063 residues: NAD-specific glutamate dehydrogenase (1063 aa).

Belongs to the Glu/Leu/Phe/Val dehydrogenases family. Highly divergent. Homotetramer.

It carries out the reaction L-glutamate + NAD(+) + H2O = 2-oxoglutarate + NH4(+) + NADH + H(+). Allosterically activated by NADP(+). In Achlya klebsiana, this protein is NAD-specific glutamate dehydrogenase.